The sequence spans 369 residues: Secondary metabolism regulator laeA (369 aa).

The interval 1 to 37 is disordered; the sequence is MFGNGQTGQRLPAMASPPHDSYYSQSLASSRSRNNSD. The span at 20-37 shows a compositional bias: low complexity; the sequence is DSYYSQSLASSRSRNNSD.

The protein belongs to the methyltransferase superfamily. LaeA methyltransferase family. In terms of assembly, component of the heterotrimeric velvet complex composed of laeA, veA and velB; VeA acting as a bridging protein between laeA and velB. Interacts directly with veA.

Its subcellular location is the nucleus. The catalysed reaction is L-methionyl-[protein] + S-adenosyl-L-methionine = S-methyl-L-methionyl-[protein] + S-adenosyl-L-homocysteine. In terms of biological role, methyltransferase that performs automethylation. No other methyl-accepting substrate has been identified yet. Component of the velvet transcription factor complex that acts as a global regulator for secondary metabolite gene expression. Required for aflR expression and subsequent aflatoxin production. Negatively regulates veA expression. Controls conidiophore and conidial development. Required for hydrophobin production which plays a role in cell surface hydrophobicity and host defense escape. This Aspergillus flavus (strain ATCC 200026 / FGSC A1120 / IAM 13836 / NRRL 3357 / JCM 12722 / SRRC 167) protein is Secondary metabolism regulator laeA.